Reading from the N-terminus, the 132-residue chain is Small ribosomal subunit protein uS8 (132 aa).

This sequence belongs to the universal ribosomal protein uS8 family. As to quaternary structure, part of the 30S ribosomal subunit. Contacts proteins S5 and S12.

Its function is as follows. One of the primary rRNA binding proteins, it binds directly to 16S rRNA central domain where it helps coordinate assembly of the platform of the 30S subunit. The protein is Small ribosomal subunit protein uS8 of Mycolicibacterium vanbaalenii (strain DSM 7251 / JCM 13017 / BCRC 16820 / KCTC 9966 / NRRL B-24157 / PYR-1) (Mycobacterium vanbaalenii).